A 208-amino-acid chain; its full sequence is Uracil phosphoribosyltransferase (208 aa).

5-phospho-alpha-D-ribose 1-diphosphate contacts are provided by residues R78, R103, and 130–138 (DPMLATGGS). Residues I193 and 198–200 (GDA) contribute to the uracil site. A 5-phospho-alpha-D-ribose 1-diphosphate-binding site is contributed by D199.

This sequence belongs to the UPRTase family. Mg(2+) is required as a cofactor.

It carries out the reaction UMP + diphosphate = 5-phospho-alpha-D-ribose 1-diphosphate + uracil. The protein operates within pyrimidine metabolism; UMP biosynthesis via salvage pathway; UMP from uracil: step 1/1. Allosterically activated by GTP. In terms of biological role, catalyzes the conversion of uracil and 5-phospho-alpha-D-ribose 1-diphosphate (PRPP) to UMP and diphosphate. This chain is Uracil phosphoribosyltransferase, found in Shewanella oneidensis (strain ATCC 700550 / JCM 31522 / CIP 106686 / LMG 19005 / NCIMB 14063 / MR-1).